The chain runs to 184 residues: Thymidine kinase (184 aa).

ATP is bound by residues 9–16 (AAMNSGKS) and 82–85 (DEAQ). Glu83 (proton acceptor) is an active-site residue. Zn(2+)-binding residues include Cys140, Cys142, Cys177, and Cys180.

This sequence belongs to the thymidine kinase family. Homotetramer.

It localises to the cytoplasm. It carries out the reaction thymidine + ATP = dTMP + ADP + H(+). This is Thymidine kinase from Chromobacterium violaceum (strain ATCC 12472 / DSM 30191 / JCM 1249 / CCUG 213 / NBRC 12614 / NCIMB 9131 / NCTC 9757 / MK).